The chain runs to 192 residues: Probable apo-citrate lyase phosphoribosyl-dephospho-CoA transferase (192 aa).

The protein belongs to the CitX family.

The catalysed reaction is apo-[citrate lyase ACP] + 2'-(5''-triphospho-alpha-D-ribosyl)-3'-dephospho-CoA = holo-[citrate lyase ACP] + diphosphate. Transfers 2-(5''-triphosphoribosyl)-3'-dephosphocoenzyme-A on a serine residue to the apo-acyl carrier protein (gamma chain) of the citrate lyase to yield holo-acyl carrier protein. This is Probable apo-citrate lyase phosphoribosyl-dephospho-CoA transferase from Streptococcus pyogenes serotype M3 (strain ATCC BAA-595 / MGAS315).